Consider the following 598-residue polypeptide: Elongation factor 4 (598 aa).

The tr-type G domain maps to 4–186 (SRLRNFSIIA…EIVKKIPPPK (183 aa)). GTP is bound by residues 16-21 (DHGKST) and 133-136 (NKID).

Belongs to the TRAFAC class translation factor GTPase superfamily. Classic translation factor GTPase family. LepA subfamily.

Its subcellular location is the cell inner membrane. It catalyses the reaction GTP + H2O = GDP + phosphate + H(+). In terms of biological role, required for accurate and efficient protein synthesis under certain stress conditions. May act as a fidelity factor of the translation reaction, by catalyzing a one-codon backward translocation of tRNAs on improperly translocated ribosomes. Back-translocation proceeds from a post-translocation (POST) complex to a pre-translocation (PRE) complex, thus giving elongation factor G a second chance to translocate the tRNAs correctly. Binds to ribosomes in a GTP-dependent manner. This chain is Elongation factor 4, found in Pelobacter propionicus (strain DSM 2379 / NBRC 103807 / OttBd1).